A 493-amino-acid polypeptide reads, in one-letter code: Glycerol kinase (493 aa).

Position 11 (threonine 11) interacts with ADP. Threonine 11, threonine 12, and serine 13 together coordinate ATP. Threonine 11 serves as a coordination point for sn-glycerol 3-phosphate. Arginine 15 is an ADP binding site. Positions 80, 81, 132, and 241 each coordinate sn-glycerol 3-phosphate. Positions 80, 81, 132, 241, and 242 each coordinate glycerol. Residues threonine 263 and glycine 306 each coordinate ADP. ATP is bound by residues threonine 263, glycine 306, glutamine 310, and glycine 408. Glycine 408 contacts ADP.

The protein belongs to the FGGY kinase family.

It catalyses the reaction glycerol + ATP = sn-glycerol 3-phosphate + ADP + H(+). The protein operates within polyol metabolism; glycerol degradation via glycerol kinase pathway; sn-glycerol 3-phosphate from glycerol: step 1/1. Its activity is regulated as follows. Inhibited by fructose 1,6-bisphosphate (FBP). Key enzyme in the regulation of glycerol uptake and metabolism. Catalyzes the phosphorylation of glycerol to yield sn-glycerol 3-phosphate. The chain is Glycerol kinase from Cereibacter sphaeroides (strain ATCC 17023 / DSM 158 / JCM 6121 / CCUG 31486 / LMG 2827 / NBRC 12203 / NCIMB 8253 / ATH 2.4.1.) (Rhodobacter sphaeroides).